We begin with the raw amino-acid sequence, 312 residues long: HPr kinase/phosphorylase (312 aa).

Catalysis depends on residues His-141 and Lys-162. ATP is bound at residue 156 to 163; it reads GDSGIGKS. Residue Ser-163 coordinates Mg(2+). The Proton acceptor; for phosphorylation activity. Proton donor; for dephosphorylation activity role is filled by Asp-180. Residues 204–213 form an important for the catalytic mechanism of both phosphorylation and dephosphorylation region; that stretch reads LEIRGVGIID. Residue Glu-205 coordinates Mg(2+). The active site involves Arg-246. Residues 267-272 are important for the catalytic mechanism of dephosphorylation; that stretch reads PVRVGR.

The protein belongs to the HPrK/P family. Homohexamer. Requires Mg(2+) as cofactor.

It carries out the reaction [HPr protein]-L-serine + ATP = [HPr protein]-O-phospho-L-serine + ADP + H(+). It catalyses the reaction [HPr protein]-O-phospho-L-serine + phosphate + H(+) = [HPr protein]-L-serine + diphosphate. In terms of biological role, catalyzes the ATP- as well as the pyrophosphate-dependent phosphorylation of a specific serine residue in HPr, a phosphocarrier protein of the phosphoenolpyruvate-dependent sugar phosphotransferase system (PTS). HprK/P also catalyzes the pyrophosphate-producing, inorganic phosphate-dependent dephosphorylation (phosphorolysis) of seryl-phosphorylated HPr (P-Ser-HPr). The two antagonistic activities of HprK/P are regulated by several intracellular metabolites, which change their concentration in response to the absence or presence of rapidly metabolisable carbon sources (glucose, fructose, etc.) in the growth medium. Therefore, by controlling the phosphorylation state of HPr, HPrK/P is a sensor enzyme that plays a major role in the regulation of carbon metabolism and sugar transport: it mediates carbon catabolite repression (CCR), and regulates PTS-catalyzed carbohydrate uptake and inducer exclusion. The polypeptide is HPr kinase/phosphorylase (Pediococcus pentosaceus (strain ATCC 25745 / CCUG 21536 / LMG 10740 / 183-1w)).